The chain runs to 452 residues: MKLKYFGTDGVRGIANETLTPELAFQLGRAGGYVLTKHAKDDEQPRVLVSRDTRISGQLLKHALISGLLSVGIEVMDMGIVTTPGVAYLVRKQEADAGVMITASHNPVQDNGIKFFGSDGYKLSDELEAEIEVLLDADKDNLPRPSSTGLGSVTDYPEGGLNYTAFLEQTIPDDLEGLHIAIDAANGATSSYVSQIFADLNTEFDTMATNPDGLNINAGVGSTHPEGLAKFVVEKGADMGVAFDGDGDRCIAVDELGNIVDGDKIMYICGKFLSERGRLKDDTVVTTVMSNLGLYKALEANDMHSVKTQVGDRYVVEEMLKDGYNLGGEQSGHIVFLDHNTTGDGMLTAIQLMYVVKQTGKKLSELAADVTTYPQKLVNVRVQDKKLALENQAIKDIIEKVENEMNGEGRVLVRPSGTEDLLRIMAEAPTKEAVGQYVDRIVAVVQSEVGVD.

The active-site Phosphoserine intermediate is the S104. Residues S104, D244, D246, and D248 each contribute to the Mg(2+) site. S104 is subject to Phosphoserine.

Belongs to the phosphohexose mutase family. The cofactor is Mg(2+). In terms of processing, activated by phosphorylation.

The catalysed reaction is alpha-D-glucosamine 1-phosphate = D-glucosamine 6-phosphate. Catalyzes the conversion of glucosamine-6-phosphate to glucosamine-1-phosphate. This chain is Phosphoglucosamine mutase, found in Pediococcus pentosaceus (strain ATCC 25745 / CCUG 21536 / LMG 10740 / 183-1w).